The primary structure comprises 242 residues: 1-(5-phosphoribosyl)-5-[(5-phosphoribosylamino)methylideneamino] imidazole-4-carboxamide isomerase (242 aa).

The Proton acceptor role is filled by Asp8. Residue Asp129 is the Proton donor of the active site.

It belongs to the HisA/HisF family.

It localises to the cytoplasm. The catalysed reaction is 1-(5-phospho-beta-D-ribosyl)-5-[(5-phospho-beta-D-ribosylamino)methylideneamino]imidazole-4-carboxamide = 5-[(5-phospho-1-deoxy-D-ribulos-1-ylimino)methylamino]-1-(5-phospho-beta-D-ribosyl)imidazole-4-carboxamide. The protein operates within amino-acid biosynthesis; L-histidine biosynthesis; L-histidine from 5-phospho-alpha-D-ribose 1-diphosphate: step 4/9. The polypeptide is 1-(5-phosphoribosyl)-5-[(5-phosphoribosylamino)methylideneamino] imidazole-4-carboxamide isomerase (Dictyoglomus turgidum (strain DSM 6724 / Z-1310)).